We begin with the raw amino-acid sequence, 332 residues long: Fe(3+) dicitrate transport system permease protein FecC (332 aa).

The Cytoplasmic segment spans residues Met1–Pro7. The helical transmembrane segment at Val8–Cys28 threads the bilayer. Over Tyr29 to Ser64 the chain is Periplasmic. A helical transmembrane segment spans residues Leu65–Thr85. The Cytoplasmic portion of the chain corresponds to His86 to Gly100. A helical membrane pass occupies residues Ala101–Leu121. A topological domain (periplasmic) is located at residue Ser122. A helical transmembrane segment spans residues Phe123–Phe143. The Cytoplasmic segment spans residues Arg144–Lys151. Residues Leu152–Leu172 form a helical membrane-spanning segment. The Periplasmic portion of the chain corresponds to Leu173–Gln199. The chain crosses the membrane as a helical span at residues Leu200–Leu220. Topologically, residues Leu221–Met244 are cytoplasmic. A helical membrane pass occupies residues Leu245–Leu265. At Leu266–Pro307 the chain is on the periplasmic side. Residues Gly308–Val328 form a helical membrane-spanning segment. Over Arg329 to Gly332 the chain is Cytoplasmic.

Belongs to the binding-protein-dependent transport system permease family. FecCD subfamily. As to quaternary structure, the complex is composed of two ATP-binding proteins (FecE), two transmembrane proteins (FecC and FecD) and a solute-binding protein (FecB). Interacts with FecB.

It localises to the cell inner membrane. Functionally, part of the ABC transporter complex FecBCDE involved in citrate-dependent Fe(3+) uptake. Probably responsible for the translocation of the substrate across the membrane. The polypeptide is Fe(3+) dicitrate transport system permease protein FecC (Escherichia coli (strain K12)).